Consider the following 319-residue polypeptide: MKRIGVLTSGGDSPGMNAAIRAVVRKAIYHDLEVYGIKNGYQGLMDGNIEKMTLGSVGDIIHRGGTILFSARSEEFKTDEGQFRAIEQLNKHNIDGLVVIGGDGSFQGAKKLTEKGFPCIGVPGTIDNDIAGTDYTIGFDTSLNTIIDAVDKVRDTATSHERTYIIEVMGRDAGDLALWAGLAVGAESILIPEEKEDFSSIVQRLKNGHDRGKKHSIILLAEGVGSGFEFGKRIEEVAELETRVTVLGHIQRGGSPTGQDRVLASRLGARAIELLIDNQGGRMVGIQKNVLVDYTFDEVFNVEHTIDKGMYKLSKELSI.

Gly-11 is an ATP binding site. 21–25 (RAVVR) is a binding site for ADP. ATP-binding positions include 72-73 (RS) and 102-105 (GDGS). Asp-103 provides a ligand contact to Mg(2+). A substrate-binding site is contributed by 125 to 127 (TID). Residue Asp-127 is the Proton acceptor of the active site. An ADP-binding site is contributed by Arg-154. Residues Arg-162 and 169-171 (MGR) contribute to the substrate site. ADP is bound by residues 185–187 (GAE), Arg-211, and 213–215 (KKH). Substrate contacts are provided by residues Glu-222, Arg-243, and 249–252 (HIQR).

This sequence belongs to the phosphofructokinase type A (PFKA) family. ATP-dependent PFK group I subfamily. Prokaryotic clade 'B1' sub-subfamily. As to quaternary structure, homotetramer. It depends on Mg(2+) as a cofactor.

It localises to the cytoplasm. The enzyme catalyses beta-D-fructose 6-phosphate + ATP = beta-D-fructose 1,6-bisphosphate + ADP + H(+). It functions in the pathway carbohydrate degradation; glycolysis; D-glyceraldehyde 3-phosphate and glycerone phosphate from D-glucose: step 3/4. Allosterically activated by ADP and other diphosphonucleosides, and allosterically inhibited by phosphoenolpyruvate. In terms of biological role, catalyzes the phosphorylation of D-fructose 6-phosphate to fructose 1,6-bisphosphate by ATP, the first committing step of glycolysis. This is ATP-dependent 6-phosphofructokinase from Oceanobacillus iheyensis (strain DSM 14371 / CIP 107618 / JCM 11309 / KCTC 3954 / HTE831).